The primary structure comprises 177 residues: ATP-dependent protease subunit HslV (177 aa).

Threonine 4 is a catalytic residue. The Na(+) site is built by serine 159, cysteine 162, and threonine 165.

Belongs to the peptidase T1B family. HslV subfamily. In terms of assembly, a double ring-shaped homohexamer of HslV is capped on each side by a ring-shaped HslU homohexamer. The assembly of the HslU/HslV complex is dependent on binding of ATP.

It localises to the cytoplasm. The catalysed reaction is ATP-dependent cleavage of peptide bonds with broad specificity.. With respect to regulation, allosterically activated by HslU binding. Functionally, protease subunit of a proteasome-like degradation complex believed to be a general protein degrading machinery. In Mesorhizobium japonicum (strain LMG 29417 / CECT 9101 / MAFF 303099) (Mesorhizobium loti (strain MAFF 303099)), this protein is ATP-dependent protease subunit HslV.